The sequence spans 539 residues: CTP synthase (539 aa).

The interval Met-1–Phe-268 is amidoligase domain. A CTP-binding site is contributed by Ser-14. Ser-14 is a UTP binding site. Position 15–20 (Ser-15–Leu-20) interacts with ATP. Tyr-55 contacts L-glutamine. Asp-72 is a binding site for ATP. Asp-72 and Glu-142 together coordinate Mg(2+). Residues Asp-149–Glu-151, Lys-188–Gln-193, and Lys-224 contribute to the CTP site. UTP contacts are provided by residues Lys-188 to Gln-193 and Lys-224. Residue Leu-242 participates in ATP binding. The Glutamine amidotransferase type-1 domain occupies Arg-294 to Glu-532. Gly-353 is a binding site for L-glutamine. The Nucleophile; for glutamine hydrolysis role is filled by Cys-380. L-glutamine contacts are provided by residues Leu-381 to Gln-384, Glu-404, and Arg-460. Catalysis depends on residues His-505 and Glu-507.

The protein belongs to the CTP synthase family. Homotetramer.

It carries out the reaction UTP + L-glutamine + ATP + H2O = CTP + L-glutamate + ADP + phosphate + 2 H(+). The catalysed reaction is L-glutamine + H2O = L-glutamate + NH4(+). The enzyme catalyses UTP + NH4(+) + ATP = CTP + ADP + phosphate + 2 H(+). It functions in the pathway pyrimidine metabolism; CTP biosynthesis via de novo pathway; CTP from UDP: step 2/2. Allosterically activated by GTP, when glutamine is the substrate; GTP has no effect on the reaction when ammonia is the substrate. The allosteric effector GTP functions by stabilizing the protein conformation that binds the tetrahedral intermediate(s) formed during glutamine hydrolysis. Inhibited by the product CTP, via allosteric rather than competitive inhibition. Its function is as follows. Catalyzes the ATP-dependent amination of UTP to CTP with either L-glutamine or ammonia as the source of nitrogen. May be involved in lipopolysaccharide biosynthesis, potentially channelling CTP directly to CMP-KDO synthetase. Regulates intracellular CTP levels through interactions with the four ribonucleotide triphosphates. This is CTP synthase from Chlamydia trachomatis serovar D (strain ATCC VR-885 / DSM 19411 / UW-3/Cx).